The following is a 398-amino-acid chain: MSKLVLVLNCGSSSLKFAVVDAQSGEQHLSGLAECLHLPEARIKWKLDGKHEAQLGEGAAHDEALSFIVETILASKPELAAQLKAIGHRVVHGGEQFTQSALIDDAVLKGIEDCAALAPLHNPAHIIGIKAAQKAFPELKNVAVFDTAFHQTMPEEAYLYALPYNLYKEHGIRRYGMHGTSHLFIAREAAERLGKPANELNIINCHLGNGASVCAIKNGQSVDTSMGLTPLEGLVMGTRCGDIDPAIIFHLHDTLGYSVEKINTMLTKESGLLGLTEVTSDCRFVEDNYGQKEEATRAMDVFCHRLAKYVAGYTASLDGRLDAITFTGGIGENSAPIREMVLNRLAIFGITVDSAANLKARFGGEGVITTADSRIPAMVIATNEELVIAEDTARLTNI.

Residue Asn9 coordinates Mg(2+). Lys16 contributes to the ATP binding site. Substrate is bound at residue Arg89. Catalysis depends on Asp146, which acts as the Proton donor/acceptor. ATP contacts are provided by residues 206–210, 281–283, and 329–333; these read HLGNG, DCR, and GIGEN. A Mg(2+)-binding site is contributed by Glu384.

This sequence belongs to the acetokinase family. Homodimer. Mg(2+) serves as cofactor. Mn(2+) is required as a cofactor.

Its subcellular location is the cytoplasm. The enzyme catalyses acetate + ATP = acetyl phosphate + ADP. The protein operates within metabolic intermediate biosynthesis; acetyl-CoA biosynthesis; acetyl-CoA from acetate: step 1/2. In terms of biological role, catalyzes the formation of acetyl phosphate from acetate and ATP. Can also catalyze the reverse reaction. The protein is Acetate kinase 1 of Vibrio cholerae serotype O1 (strain ATCC 39315 / El Tor Inaba N16961).